The sequence spans 376 residues: Putative F-box/FBD/LRR-repeat protein At5g52460 (376 aa).

Residues 16 to 75 (RDEISSLPDDLLIQILLLVPIKDAVGTMILSKRWRYVWTLLPKLEYSDPGDECESVWKFL) form the F-box domain. LRR repeat units lie at residues 131–154 (CKTL…VCLP) and 199–224 (FAKV…KFLK). Residues 296 to 348 (CHGTNQGTVPRCLSAHLDEEFVWHGYRGNEEETQLIRYIFANAKCLKKREIST) form the FBD domain.

The polypeptide is Putative F-box/FBD/LRR-repeat protein At5g52460 (EDA41) (Arabidopsis thaliana (Mouse-ear cress)).